Reading from the N-terminus, the 507-residue chain is Histidine ammonia-lyase (507 aa).

The segment at residues 141-143 (ASG) is a cross-link (5-imidazolinone (Ala-Gly)). A 2,3-didehydroalanine (Ser) modification is found at Ser142.

This sequence belongs to the PAL/histidase family. Post-translationally, contains an active site 4-methylidene-imidazol-5-one (MIO), which is formed autocatalytically by cyclization and dehydration of residues Ala-Ser-Gly.

It localises to the cytoplasm. The enzyme catalyses L-histidine = trans-urocanate + NH4(+). Its pathway is amino-acid degradation; L-histidine degradation into L-glutamate; N-formimidoyl-L-glutamate from L-histidine: step 1/3. This Burkholderia ambifaria (strain MC40-6) protein is Histidine ammonia-lyase.